The primary structure comprises 375 residues: DNA replication and repair protein RecF (375 aa).

Residue 30–37 (GENAQGKT) participates in ATP binding.

Belongs to the RecF family.

It localises to the cytoplasm. Its function is as follows. The RecF protein is involved in DNA metabolism; it is required for DNA replication and normal SOS inducibility. RecF binds preferentially to single-stranded, linear DNA. It also seems to bind ATP. The chain is DNA replication and repair protein RecF from Bacillus mycoides (strain KBAB4) (Bacillus weihenstephanensis).